The primary structure comprises 211 residues: Large ribosomal subunit protein uL3 (211 aa).

An N5-methylglutamine modification is found at Gln150.

It belongs to the universal ribosomal protein uL3 family. As to quaternary structure, part of the 50S ribosomal subunit. Forms a cluster with proteins L14 and L19. Post-translationally, methylated by PrmB.

Its function is as follows. One of the primary rRNA binding proteins, it binds directly near the 3'-end of the 23S rRNA, where it nucleates assembly of the 50S subunit. The protein is Large ribosomal subunit protein uL3 of Pseudomonas syringae pv. syringae (strain B728a).